The primary structure comprises 582 residues: Dihydroxy-acid dehydratase 3 (582 aa).

Position 67 (Cys67) interacts with [2Fe-2S] cluster. Mg(2+) is bound at residue Asp99. Cys140 lines the [2Fe-2S] cluster pocket. Mg(2+)-binding residues include Asp141 and Lys142. Lys142 is subject to N6-carboxylysine. Cys212 serves as a coordination point for [2Fe-2S] cluster. Mg(2+) is bound at residue Glu462. Ser488 functions as the Proton acceptor in the catalytic mechanism.

This sequence belongs to the IlvD/Edd family. As to quaternary structure, homodimer. [2Fe-2S] cluster is required as a cofactor. Requires Mg(2+) as cofactor.

The enzyme catalyses (2R)-2,3-dihydroxy-3-methylbutanoate = 3-methyl-2-oxobutanoate + H2O. It catalyses the reaction (2R,3R)-2,3-dihydroxy-3-methylpentanoate = (S)-3-methyl-2-oxopentanoate + H2O. It participates in amino-acid biosynthesis; L-isoleucine biosynthesis; L-isoleucine from 2-oxobutanoate: step 3/4. The protein operates within amino-acid biosynthesis; L-valine biosynthesis; L-valine from pyruvate: step 3/4. Functions in the biosynthesis of branched-chain amino acids. Catalyzes the dehydration of (2R,3R)-2,3-dihydroxy-3-methylpentanoate (2,3-dihydroxy-3-methylvalerate) into 2-oxo-3-methylpentanoate (2-oxo-3-methylvalerate) and of (2R)-2,3-dihydroxy-3-methylbutanoate (2,3-dihydroxyisovalerate) into 2-oxo-3-methylbutanoate (2-oxoisovalerate), the penultimate precursor to L-isoleucine and L-valine, respectively. The protein is Dihydroxy-acid dehydratase 3 of Bradyrhizobium diazoefficiens (strain JCM 10833 / BCRC 13528 / IAM 13628 / NBRC 14792 / USDA 110).